Consider the following 161-residue polypeptide: S-ribosylhomocysteine lyase (161 aa).

3 residues coordinate Fe cation: His-57, His-61, and Cys-124.

Belongs to the LuxS family. As to quaternary structure, homodimer. Fe cation is required as a cofactor.

The catalysed reaction is S-(5-deoxy-D-ribos-5-yl)-L-homocysteine = (S)-4,5-dihydroxypentane-2,3-dione + L-homocysteine. Involved in the synthesis of autoinducer 2 (AI-2) which is secreted by bacteria and is used to communicate both the cell density and the metabolic potential of the environment. The regulation of gene expression in response to changes in cell density is called quorum sensing. Catalyzes the transformation of S-ribosylhomocysteine (RHC) to homocysteine (HC) and 4,5-dihydroxy-2,3-pentadione (DPD). The protein is S-ribosylhomocysteine lyase of Macrococcus caseolyticus (strain JCSC5402) (Macrococcoides caseolyticum).